The chain runs to 294 residues: Survival motor neuron protein (294 aa).

Residues M1–V12 show a composition bias toward gly residues. Positions M1–D32 are disordered. A2 is subject to N-acetylalanine. S4, S5, and S8 each carry phosphoserine; by PKA. Positions P13 to D44 are P1 (binding site for GEMIN2). Position 25 is a phosphothreonine (T25). 2 positions are modified to phosphoserine: S28 and S31. K51 is covalently cross-linked (Glycyl lysine isopeptide (Lys-Gly) (interchain with G-Cter in SUMO2)). The segment at D58 to P88 is disordered. Over residues T68 to K82 the composition is skewed to basic residues. Phosphothreonine is present on T69. A Phosphothreonine; by PKA modification is found at T85. Residues Q91–N151 enclose the Tudor domain. The tract at residues K97–K209 is required for interaction with RPP20/POP7. The segment covering A156–S166 has biased composition (low complexity). Residues A156–P222 are disordered. Phosphoserine; by PKA is present on S187. Residues L194–R204 show a composition bias toward pro residues. K209 is covalently cross-linked (Glycyl lysine isopeptide (Lys-Gly) (interchain with G-Cter in SUMO2)). The interval P240–W267 is P2 (binding site for SM B). Residues G279–N294 form a required for interaction with SYNCRIP region.

The protein belongs to the SMN family. In terms of assembly, homooligomer; may form higher order homooligomers in the dimer to octamer range. Part of the core SMN complex that contains SMN1, GEMIN2/SIP1, DDX20/GEMIN3, GEMIN4, GEMIN5, GEMIN6, GEMIN7, GEMIN8 and STRAP/UNRIP. Part of the SMN-Sm complex that contains SMN1, GEMIN2/SIP1, DDX20/GEMIN3, GEMIN4, GEMIN5, GEMIN6, GEMIN7, GEMIN8, STRAP/UNRIP and the Sm proteins SNRPB, SNRPD1, SNRPD2, SNRPD3, SNRPE, SNRPF and SNRPG. Component of an import snRNP complex composed of KPNB1, RNUT1, SMN1 and ZNF259. Interacts with DDX20, FBL, NOLA1, RNUT1, SYNCRIP and with several spliceosomal snRNP core Sm proteins, including SNRPB, SNRPD1, SNRPD2, SNRPD3, SNRPE and ILF3. Interacts with GEMIN2; the interaction is direct. Interacts with GEMIN3; the interaction is direct. Interacts with GEMIN8; the interaction is direct. Interacts with SNRPB; the interaction is direct. Interacts (via Tudor domain) with SNRPD1 (via C-terminus); the interaction is direct. Interacts with SNRPD2; the interaction is direct. Interacts (via Tudor domain) with SNRPD3 (via C-terminus); the interaction is direct. Interacts with SNRPE; the interaction is direct. Interacts with OSTF1, LSM10, LSM11 and RPP20/POP7. Interacts (via C-terminal region) with ZPR1 (via C-terminal region). Interacts (via Tudor domain) with COIL. Interacts with SETX; recruits SETX to POLR2A. Interacts with POLR2A (via the C-terminal domain (CTD)). Interacts with PRMT5. Interacts with XRN2. Interacts (via C-terminus) with FMR1 (via C-terminus); the interaction is direct and occurs in a RNA-independent manner. Interacts (via Tudor domain) with SF3B2 ('Arg-508'-methylated form). Interacts with WRAP53/TCAB1. Interacts (via Tudor domain) with ELAVL4 in an RNA-independent manner; the interaction is required for localization of ELAVL4 to RNA granules. Interacts with FRG1.

It localises to the nucleus. Its subcellular location is the gem. The protein localises to the cajal body. It is found in the cytoplasm. The protein resides in the cytoplasmic granule. It localises to the perikaryon. Its subcellular location is the cell projection. The protein localises to the neuron projection. It is found in the axon. The protein resides in the myofibril. It localises to the sarcomere. Its subcellular location is the z line. The SMN complex catalyzes the assembly of small nuclear ribonucleoproteins (snRNPs), the building blocks of the spliceosome, and thereby plays an important role in the splicing of cellular pre-mRNAs. Most spliceosomal snRNPs contain a common set of Sm proteins SNRPB, SNRPD1, SNRPD2, SNRPD3, SNRPE, SNRPF and SNRPG that assemble in a heptameric protein ring on the Sm site of the small nuclear RNA to form the core snRNP (Sm core). In the cytosol, the Sm proteins SNRPD1, SNRPD2, SNRPE, SNRPF and SNRPG are trapped in an inactive 6S pICln-Sm complex by the chaperone CLNS1A that controls the assembly of the core snRNP. To assemble core snRNPs, the SMN complex accepts the trapped 5Sm proteins from CLNS1A forming an intermediate. Binding of snRNA inside 5Sm ultimately triggers eviction of the SMN complex, thereby allowing binding of SNRPD3 and SNRPB to complete assembly of the core snRNP. Within the SMN complex, SMN1 acts as a structural backbone and together with GEMIN2 it gathers the Sm complex subunits. Ensures the correct splicing of U12 intron-containing genes that may be important for normal motor and proprioceptive neurons development. Also required for resolving RNA-DNA hybrids created by RNA polymerase II, that form R-loop in transcription terminal regions, an important step in proper transcription termination. May also play a role in the metabolism of small nucleolar ribonucleoprotein (snoRNPs). This Macaca fascicularis (Crab-eating macaque) protein is Survival motor neuron protein (SMN1).